The chain runs to 373 residues: NAD(P)H-quinone oxidoreductase subunit 1 (373 aa).

Helical transmembrane passes span 29-49 (LWVP…VMVM), 64-84 (IGPN…GIKL), 98-118 (VLFT…YLVV), 129-149 (IAIG…GLLM), 177-197 (LALS…VGIV), 202-222 (GLGI…IFLI), 267-287 (LLAS…VVPV), 309-329 (VLGI…AILL), and 348-368 (FLLP…LAFP).

It belongs to the complex I subunit 1 family. NDH-1 is composed of at least 11 different subunits.

The protein localises to the cellular thylakoid membrane. The enzyme catalyses a plastoquinone + NADH + (n+1) H(+)(in) = a plastoquinol + NAD(+) + n H(+)(out). The catalysed reaction is a plastoquinone + NADPH + (n+1) H(+)(in) = a plastoquinol + NADP(+) + n H(+)(out). NDH-1 shuttles electrons from an unknown electron donor, via FMN and iron-sulfur (Fe-S) centers, to quinones in the respiratory and/or the photosynthetic chain. The immediate electron acceptor for the enzyme in this species is believed to be plastoquinone. Couples the redox reaction to proton translocation, and thus conserves the redox energy in a proton gradient. This is NAD(P)H-quinone oxidoreductase subunit 1 from Synechococcus sp. (strain JA-3-3Ab) (Cyanobacteria bacterium Yellowstone A-Prime).